The following is a 436-amino-acid chain: UPF0597 protein YhaM (436 aa).

It belongs to the UPF0597 family.

The protein is UPF0597 protein YhaM of Escherichia coli O45:K1 (strain S88 / ExPEC).